We begin with the raw amino-acid sequence, 371 residues long: Envelope glycoprotein M (371 aa).

At 1–13 (MAPSHVDKVNTRT) the chain is on the intravirion side. The chain crosses the membrane as a helical span at residues 14 to 34 (WSASIVFMVLTFVNVSVHLVL). Residues 35–79 (SNFPHLGYPCVYYHVVDFERLNMSAYNVMHLHTPMLFLDSVQLVC) are Virion surface-facing. A helical transmembrane segment spans residues 80–100 (YAVFMQLVFLAVTIYYLVCWI). Over 101-126 (KISMRKDKGMSLNQSTRDISYMGDSL) the chain is Intravirion. Residues 127–147 (TAFLFILSMDTFQLFTLTMSF) traverse the membrane as a helical segment. Residues 148-151 (RLPS) are Virion surface-facing. A helical transmembrane segment spans residues 152-172 (MIAFMAAVHFFCLTIFNVSMV). The Intravirion segment spans residues 173–200 (TQYRSYKRSLFFFSRLHPKLKGTVQFRT). Residues 201–221 (LIVNLVEVALGFNTTVVAMAL) traverse the membrane as a helical segment. At 222–239 (CYGFGNNFFVRTGHMVLA) the chain is on the virion surface side. Residues 240–260 (VFVVYAIISIIYFLLIEAVFF) traverse the membrane as a helical segment. The Intravirion segment spans residues 261-264 (QYVK). The helical transmembrane segment at 265–285 (VQFGYHLGAFFGLCGLIYPIV) threads the bilayer. At 286 to 298 (QYDTFLSNEYRTG) the chain is on the virion surface side. Residues 299-319 (ISWSFGMLFFIWAMFTTCRAV) form a helical membrane-spanning segment. The Intravirion segment spans residues 320-371 (RYFRGRGSGSVKYQALATASGEEVAALSHHDSLESRRLREEEDDDDEDFEDA). Residues 346–371 (LSHHDSLESRRLREEEDDDDEDFEDA) are disordered. Residues 347–359 (SHHDSLESRRLRE) show a composition bias toward basic and acidic residues. The segment covering 360–371 (EEDDDDEDFEDA) has biased composition (acidic residues).

It belongs to the herpesviridae glycoprotein M family. Interacts (via N-terminus) with gN (via N-terminus). The gM-gN heterodimer forms the gCII complex.

The protein localises to the virion membrane. Its subcellular location is the host Golgi apparatus. The protein resides in the host trans-Golgi network. It localises to the host endosome membrane. It is found in the host nucleus inner membrane. Functionally, envelope glycoprotein important for virion assembly and egress. Plays a role in the correct incorporation of gH-gL into virion membrane. Directs the glycoprotein N (gN) to the host trans-Golgi network. The protein is Envelope glycoprotein M of Homo sapiens (Human).